A 209-amino-acid polypeptide reads, in one-letter code: Small ribosomal subunit protein uS4 (209 aa).

The S4 RNA-binding domain occupies Ser98–Ala164.

It belongs to the universal ribosomal protein uS4 family. Part of the 30S ribosomal subunit. Contacts protein S5. The interaction surface between S4 and S5 is involved in control of translational fidelity.

Functionally, one of the primary rRNA binding proteins, it binds directly to 16S rRNA where it nucleates assembly of the body of the 30S subunit. Its function is as follows. With S5 and S12 plays an important role in translational accuracy. In Frankia alni (strain DSM 45986 / CECT 9034 / ACN14a), this protein is Small ribosomal subunit protein uS4.